Here is a 582-residue protein sequence, read N- to C-terminus: Threonine--tRNA ligase (582 aa).

A catalytic region spans residues 185–478 (DHRKLGKELE…LTEQYGGAFP (294 aa)). Zn(2+)-binding residues include Cys278, His329, and His455.

It belongs to the class-II aminoacyl-tRNA synthetase family. As to quaternary structure, homodimer. It depends on Zn(2+) as a cofactor.

Its subcellular location is the cytoplasm. The enzyme catalyses tRNA(Thr) + L-threonine + ATP = L-threonyl-tRNA(Thr) + AMP + diphosphate + H(+). In terms of biological role, catalyzes the attachment of threonine to tRNA(Thr) in a two-step reaction: L-threonine is first activated by ATP to form Thr-AMP and then transferred to the acceptor end of tRNA(Thr). Also edits incorrectly charged L-seryl-tRNA(Thr). This Dehalococcoides mccartyi (strain ATCC BAA-2266 / KCTC 15142 / 195) (Dehalococcoides ethenogenes (strain 195)) protein is Threonine--tRNA ligase.